We begin with the raw amino-acid sequence, 969 residues long: MFQLPVNNLTRLRKARKKVKRLLSDIGLDYCKEHVEDYKDVDPDDSDDSNESHLDLCTWDPTWTKSQDYRTKQFCCSDCPFASKYFSAYKNHFRNVHREDFESRILLNCSYCTYSGNKRTLETHVRLFHMPHNVMRQGVVGPHGAPVGAKDGMRVDKPMLGDRKELPVYYCKKCTYRDRLYNVVRRHIYREHFQHVATPYLGKNSEKQVNSGEAQANSHGIHCKSCHFTPRSYEALVQHVIEFHERIGHQVTAMIGHTNVIVPRLQTNPIQRGVPITSGVRPQTPQMNRFSMPKVVGLPVGNHFKQSLAGNSVPGQPVRVTLPDKAFVSSAVSHSHSGKHLGGFGVHGAAHLNAQSASFSPSLKSLPLSSSVHAATATLTSLQAKKASANALNTSQTQKWKICTICNELFPESAYSAHFEKEHQAEKVRAMAKYIMKIHNFTSKCLYCNRYLPSDSLLNHMLVHGLSCPHCHSTFHEVEKIVAHNRLAHPNEQGDQPTGSPLTFDLTLQQGNLKNVQLLVTTYNMKETPEAAAAAAAANQLSQNSAMPKPVKVSVRQPDTQSDSLVRNMSQSPVSQKKEVGKTLCPLCFTILKGPISDALAHHLRDSHQVLQTLHPVEKKLTYKCIHCLGVYTSNMTASTITLHLVHCRGVCQTPKGSKPITTGLRSPGAGSLKRELVTPDPSDPKRRKMVDQSRFYPTGFAEKPEEPIVLALDPKGYGDKSYEVRKAFLTAYFNRHPYPSQREVEKLAASLWLWKSDVASHFGNHRRLCDRDFTSRKPVVLLGFNMRLLSQIKHDMSFDDSCLFEVFDDEKSGYSRTSSFRLKSPIGFPADFIGSKQPLNTGQSSQSNCAFKTCPGSSSEPIAIDSDSDSELEVIPNENVSQHTPALRPSIVQSQTKGALLRESLRCERDVRANRSSPRVGPKVLDGSVSSSSPDEATWSGNMSSEESHYIPAGRFEVKGKKVGLLGR.

A C2H2-type 1 zinc finger spans residues 74–97 (FCCSDCPFASKYFSAYKNHFRNVH). The C2H2-type 2; atypical zinc-finger motif lies at 107-129 (LNCSYCTYSGNKRTLETHVRLFH). 2 consecutive C2H2-type zinc fingers follow at residues 169–192 (YYCKKCTYRDRLYNVVRRHIYREH) and 221–244 (IHCKSCHFTPRSYEALVQHVIEFH). The C2H2-type 5; atypical zinc finger occupies 401–423 (KICTICNELFPESAYSAHFEKEH). The segment at 443–464 (SKCLYCNRYLPSDSLLNHMLVH) adopts a C2H2-type 6; atypical zinc-finger fold. A C2H2-type 7 zinc finger spans residues 466–489 (LSCPHCHSTFHEVEKIVAHNRLAH). The C2H2-type 8; atypical zinc-finger motif lies at 583 to 608 (TLCPLCFTILKGPISDALAHHLRDSH). A C2H2-type 9; atypical zinc finger spans residues 623-647 (YKCIHCLGVYTSNMTASTITLHLVH). The disordered stretch occupies residues 659 to 689 (KPITTGLRSPGAGSLKRELVTPDPSDPKRRK). The segment at residues 732-774 (AYFNRHPYPSQREVEKLAASLWLWKSDVASHFGNHRRLCDRDF) is a DNA-binding region (homeobox). The disordered stretch occupies residues 911-949 (DVRANRSSPRVGPKVLDGSVSSSSPDEATWSGNMSSEES). Over residues 929 to 946 (SVSSSSPDEATWSGNMSS) the composition is skewed to polar residues.

In terms of assembly, interacts with catenin beta-1/ctnnb1.

Its subcellular location is the nucleus. Functionally, may be involved in transcriptional regulation. Positively modulates wnt-beta-catenin/ctnnb1 signaling. Required for embryonic neurogenesis. Required for progression through late erythroid differentiation. In Danio rerio (Zebrafish), this protein is Activity-dependent neuroprotective protein a.